A 399-amino-acid polypeptide reads, in one-letter code: Putative glutamate--cysteine ligase 2 (399 aa).

A disordered region spans residues 377–399 (PAVGSSHGRTDPSRNGGPSHAGA).

Belongs to the glutamate--cysteine ligase type 2 family. YbdK subfamily.

It catalyses the reaction L-cysteine + L-glutamate + ATP = gamma-L-glutamyl-L-cysteine + ADP + phosphate + H(+). Its function is as follows. ATP-dependent carboxylate-amine ligase which exhibits weak glutamate--cysteine ligase activity. The protein is Putative glutamate--cysteine ligase 2 of Thermobifida fusca (strain YX).